A 188-amino-acid polypeptide reads, in one-letter code: dCTP deaminase (188 aa).

DCTP is bound by residues 111 to 116 (KSTYAR), 135 to 137 (TLE), Q156, Y170, and Q180. E137 (proton donor/acceptor) is an active-site residue.

It belongs to the dCTP deaminase family. In terms of assembly, homotrimer.

The catalysed reaction is dCTP + H2O + H(+) = dUTP + NH4(+). The protein operates within pyrimidine metabolism; dUMP biosynthesis; dUMP from dCTP (dUTP route): step 1/2. Functionally, catalyzes the deamination of dCTP to dUTP. The chain is dCTP deaminase from Pseudomonas putida (strain GB-1).